The chain runs to 201 residues: Superoxide dismutase [Fe] (201 aa).

Residues H27, H79, D161, and H165 each coordinate Fe cation.

The protein belongs to the iron/manganese superoxide dismutase family. In terms of assembly, homodimer. It depends on Fe cation as a cofactor.

The enzyme catalyses 2 superoxide + 2 H(+) = H2O2 + O2. Its function is as follows. Destroys superoxide anion radicals which are normally produced within the cells and which are toxic to biological systems. In Synechococcus elongatus (strain ATCC 33912 / PCC 7942 / FACHB-805) (Anacystis nidulans R2), this protein is Superoxide dismutase [Fe] (sodB).